The chain runs to 359 residues: sn-1 acyl-lipid omega-3 desaturase (ferredoxin) (359 aa).

The segment covering 1–15 (MQLDTISFNNPLNSE) has biased composition (polar residues). Residues 1–20 (MQLDTISFNNPLNSETSEDT) form a disordered region. 2 consecutive transmembrane segments (helical) span residues 47-67 (LFYF…ASYL) and 70-90 (WLFF…LFVV). The Histidine box-1 motif lies at 92–96 (HDCGH). Positions 128-132 (HRTHH) match the Histidine box-2 motif. 2 consecutive transmembrane segments (helical) span residues 207–227 (VLLI…GWMW) and 228–248 (LLKY…LVTF). The short motif at 294–298 (HHIFL) is the Histidine box-3 element.

The protein belongs to the fatty acid desaturase type 2 family. Fe(2+) serves as cofactor.

Its subcellular location is the membrane. The catalysed reaction is a 1-[(9Z,12Z)-octadecdienoyl]-2-acyl-glycerolipid + 2 reduced [2Fe-2S]-[ferredoxin] + O2 + 2 H(+) = a 1-[(9Z,12Z,15Z)-octadectrienoyl]-2-acyl-glycerolipid + 2 oxidized [2Fe-2S]-[ferredoxin] + 2 H2O. It catalyses the reaction a 1-[(6Z,9Z,12Z)-octadectrienoyl]-2-acyl-glycerolipid + 2 reduced [2Fe-2S]-[ferredoxin] + O2 + 2 H(+) = a 1-[(6Z,9Z,12Z,15Z)-octadectetraenoyl]-2-acyl-glycerolipid + 2 oxidized [2Fe-2S]-[ferredoxin] + 2 H2O. It functions in the pathway lipid metabolism; polyunsaturated fatty acid biosynthesis. Functionally, desaturase involved in fatty acid biosynthesis. Introduces a double bond at carbon 15 of linoleoyl and gamma-linolenoyl groups attached to the sn-1 position of the glycerol moiety of membrane glycerolipids. The protein is sn-1 acyl-lipid omega-3 desaturase (ferredoxin) of Nostoc sp. (strain 36).